The primary structure comprises 268 residues: Testis-specific serine/threonine-protein kinase 3 (268 aa).

Residues 10 to 265 (YQLGKTIGEG…IEEVSWHPWL (256 aa)) enclose the Protein kinase domain. Residues 16–24 (IGEGTYSKV) and lysine 39 each bind ATP. Aspartate 134 serves as the catalytic Proton acceptor. Position 166 is a phosphoserine; by autocatalysis (serine 166). Threonine 168 bears the Phosphothreonine; by PDPK1 mark.

The protein belongs to the protein kinase superfamily. CAMK Ser/Thr protein kinase family. Mg(2+) serves as cofactor. Mn(2+) is required as a cofactor. In terms of processing, autophosphorylated at Ser-166. Phosphorylation at Thr-168 by PDPK1 activates the serine/threonine protein kinase activity. Developmentally expressed in testicular germ cells. In adult testis, expression was detected in round and condensing spermatids, but not in meiotic pachytene spermatocytes. Not expressed in brain, ovary, kidney, liver or early embryonic cells.

The protein localises to the cell projection. Its subcellular location is the cilium. The protein resides in the flagellum. The enzyme catalyses L-seryl-[protein] + ATP = O-phospho-L-seryl-[protein] + ADP + H(+). It carries out the reaction L-threonyl-[protein] + ATP = O-phospho-L-threonyl-[protein] + ADP + H(+). Its activity is regulated as follows. Activated by phosphorylation on Thr-168 by PDPK1. Serine/threonine protein kinase required for spermatid development and male fertility. The protein is Testis-specific serine/threonine-protein kinase 3 of Mus musculus (Mouse).